Reading from the N-terminus, the 431-residue chain is UDP-N-acetylmuramate--L-alanine ligase (431 aa).

ATP is bound at residue 108–114 (GAHGKST).

It belongs to the MurCDEF family.

It is found in the cytoplasm. The enzyme catalyses UDP-N-acetyl-alpha-D-muramate + L-alanine + ATP = UDP-N-acetyl-alpha-D-muramoyl-L-alanine + ADP + phosphate + H(+). Its pathway is cell wall biogenesis; peptidoglycan biosynthesis. Functionally, cell wall formation. This Campylobacter jejuni subsp. jejuni serotype O:6 (strain 81116 / NCTC 11828) protein is UDP-N-acetylmuramate--L-alanine ligase.